The following is a 297-amino-acid chain: Large ribosomal subunit protein uL10 (297 aa).

This sequence belongs to the universal ribosomal protein uL10 family. In terms of assembly, part of the 50S ribosomal subunit. Forms part of the ribosomal stalk which helps the ribosome interact with GTP-bound translation factors. Forms a heptameric L10(L12)2(L12)2(L12)2 complex, where L10 forms an elongated spine to which the L12 dimers bind in a sequential fashion.

Functionally, forms part of the ribosomal stalk, playing a central role in the interaction of the ribosome with GTP-bound translation factors. This is Large ribosomal subunit protein uL10 from Methanococcus voltae.